The chain runs to 549 residues: Hydroxylamine reductase (549 aa).

[4Fe-4S] cluster is bound by residues C5, C8, C17, and C23. H244, E268, C312, C403, C431, C456, E491, and K493 together coordinate hybrid [4Fe-2O-2S] cluster. C403 is modified (cysteine persulfide).

Belongs to the HCP family. The cofactor is [4Fe-4S] cluster. Requires hybrid [4Fe-2O-2S] cluster as cofactor.

It is found in the cytoplasm. It catalyses the reaction A + NH4(+) + H2O = hydroxylamine + AH2 + H(+). Catalyzes the reduction of hydroxylamine to form NH(3) and H(2)O. This chain is Hydroxylamine reductase, found in Clostridium perfringens (strain 13 / Type A).